We begin with the raw amino-acid sequence, 239 residues long: Sensory rhodopsin-1 (239 aa).

Over 1-3 (MDA) the chain is Extracellular. A helical transmembrane segment spans residues 4 to 25 (VATAYLGGAVALIVGVAFVWLL). Over 26 to 34 (YRSLDGSPH) the chain is Cytoplasmic. A helical membrane pass occupies residues 35 to 56 (QSALAPLAIIPVFAGLSYVGMA). Residues 57–70 (YDIGTVIVNGNQIV) are Extracellular-facing. The helical transmembrane segment at 71–92 (GLRYIDWLVTTPILVGYVGYAA) threads the bilayer. Topologically, residues 93 to 95 (GAS) are cytoplasmic. Residues 96–118 (RRSIIGVMVADALMIAVGAGAVV) traverse the membrane as a helical segment. Residues 119–122 (TDGT) are Extracellular-facing. The helical transmembrane segment at 123-150 (LKWALFGVSSIFHLSLFAYLYVIFPRVV) threads the bilayer. The Cytoplasmic portion of the chain corresponds to 151–153 (PDV). The helical transmembrane segment at 154–181 (PEQIGLFNLLKNHIGLLWLAYPLVWLFG) threads the bilayer. Residues 182-189 (PAGIGEAT) lie on the Extracellular side of the membrane. A helical membrane pass occupies residues 190-222 (AAGVALTYVFLDVLAKVPYVYFFYARRRVFMHS). K205 is subject to N6-(retinylidene)lysine. Residues 223-239 (ESPPAPEQATVEATAAD) are Cytoplasmic-facing.

Belongs to the archaeal/bacterial/fungal opsin family. Interacts with HTR-I.

It localises to the cell membrane. Functionally, involved in the control of phototaxis. Mediates both photoattractant (in the orange light) and photophobic (in the near UV light) responses. The signal is then transmitted to the sensory rhodopsin I transducer (HTR-I). This is Sensory rhodopsin-1 (sopI) from Halobacterium salinarum (strain ATCC 29341 / DSM 671 / R1).